The sequence spans 413 residues: Elongation factor 1-alpha (413 aa).

GTP-binding positions include 1–7 (HVDSGKS), 77–81 (DAPGH), and 139–142 (NKMD). The region spanning 1-228 (HVDSGKSTTT…DAILPPARPT (228 aa)) is the tr-type G domain. Glu287 and Glu360 each carry 5-glutamyl glycerylphosphorylethanolamine.

It belongs to the TRAFAC class translation factor GTPase superfamily. Classic translation factor GTPase family. EF-Tu/EF-1A subfamily.

It localises to the cytoplasm. Functionally, this protein promotes the GTP-dependent binding of aminoacyl-tRNA to the A-site of ribosomes during protein biosynthesis. The sequence is that of Elongation factor 1-alpha from Heliocheilus albipunctella (Millet head miner).